The sequence spans 262 residues: Pyridoxine 5'-phosphate synthase (262 aa).

Asn-6 contacts 3-amino-2-oxopropyl phosphate. 8-9 (DH) contacts 1-deoxy-D-xylulose 5-phosphate. 3-amino-2-oxopropyl phosphate is bound at residue Arg-17. The active-site Proton acceptor is His-43. 1-deoxy-D-xylulose 5-phosphate is bound by residues Arg-45 and His-50. The Proton acceptor role is filled by Glu-70. 1-deoxy-D-xylulose 5-phosphate is bound at residue Thr-102. The active-site Proton donor is His-215. 3-amino-2-oxopropyl phosphate is bound by residues Gly-216 and 237-238 (GH).

This sequence belongs to the PNP synthase family. Homooctamer; tetramer of dimers.

It localises to the cytoplasm. The enzyme catalyses 3-amino-2-oxopropyl phosphate + 1-deoxy-D-xylulose 5-phosphate = pyridoxine 5'-phosphate + phosphate + 2 H2O + H(+). Its pathway is cofactor biosynthesis; pyridoxine 5'-phosphate biosynthesis; pyridoxine 5'-phosphate from D-erythrose 4-phosphate: step 5/5. In terms of biological role, catalyzes the complicated ring closure reaction between the two acyclic compounds 1-deoxy-D-xylulose-5-phosphate (DXP) and 3-amino-2-oxopropyl phosphate (1-amino-acetone-3-phosphate or AAP) to form pyridoxine 5'-phosphate (PNP) and inorganic phosphate. The protein is Pyridoxine 5'-phosphate synthase of Helicobacter pylori (strain P12).